Reading from the N-terminus, the 776-residue chain is Photosystem I P700 chlorophyll a apoprotein A1 (776 aa).

The next 8 membrane-spanning stretches (helical) occupy residues 76-99, 162-185, 201-225, 309-327, 368-391, 407-433, 455-477, and 557-575; these read IFSA…FHGA, LMAL…FHYH, LQHH…HVAN, VAHH…GHVY, WHAQ…HHMY, LGLF…IAVI, AIIS…LYIH, and LMIH…LILL. Cys599 and Cys608 together coordinate [4Fe-4S] cluster. 2 helical membrane-spanning segments follow: residues 615-636 and 690-712; these read HVFL…YFSW and LSGY…MFLF. His701 is a divinylchlorophyll a' binding site. The divinyl chlorophyll a site is built by Met709 and Tyr717. Trp718 is a phylloquinone binding site. The helical transmembrane segment at 750–770 threads the bilayer; the sequence is AVGVTHFLFGGIVTTWAFFHA.

The protein belongs to the PsaA/PsaB family. As to quaternary structure, the PsaA/B heterodimer binds the P700 chlorophyll special pair and subsequent electron acceptors. PSI consists of a core antenna complex that captures photons, and an electron transfer chain that converts photonic excitation into a charge separation. The cyanobacterial PSI reaction center is composed of one copy each of PsaA,B,C,D,E,F,I,J,K,L,M and X, and forms trimeric complexes. It depends on PSI electron transfer chain: 5 divinyl chlorophyll a, 1 divinyl chlorophyll a', 2 phylloquinones and 3 4Fe-4S clusters. PSI core antenna: 90 divinyl chlorophyll a, 22 carotenoids, 3 phospholipids and 1 galactolipid. P700 is a divinyl chlorophyll a/divinyl chlorophyll a' dimer, A0 is one or more chlorophyll divinyl a, A1 is one or both phylloquinones and FX is a shared 4Fe-4S iron-sulfur center. as a cofactor.

Its subcellular location is the cellular thylakoid membrane. The catalysed reaction is reduced [plastocyanin] + hnu + oxidized [2Fe-2S]-[ferredoxin] = oxidized [plastocyanin] + reduced [2Fe-2S]-[ferredoxin]. In terms of biological role, psaA and PsaB bind P700, the primary electron donor of photosystem I (PSI), as well as the electron acceptors A0, A1 and FX. PSI is a plastocyanin/cytochrome c6-ferredoxin oxidoreductase, converting photonic excitation into a charge separation, which transfers an electron from the donor P700 chlorophyll pair to the spectroscopically characterized acceptors A0, A1, FX, FA and FB in turn. Oxidized P700 is reduced on the lumenal side of the thylakoid membrane by plastocyanin or cytochrome c6. The sequence is that of Photosystem I P700 chlorophyll a apoprotein A1 from Prochlorococcus marinus (strain MIT 9313).